The sequence spans 245 residues: 2-C-methyl-D-erythritol 4-phosphate cytidylyltransferase (245 aa).

It belongs to the IspD/TarI cytidylyltransferase family. IspD subfamily.

The catalysed reaction is 2-C-methyl-D-erythritol 4-phosphate + CTP + H(+) = 4-CDP-2-C-methyl-D-erythritol + diphosphate. It participates in isoprenoid biosynthesis; isopentenyl diphosphate biosynthesis via DXP pathway; isopentenyl diphosphate from 1-deoxy-D-xylulose 5-phosphate: step 2/6. Functionally, catalyzes the formation of 4-diphosphocytidyl-2-C-methyl-D-erythritol from CTP and 2-C-methyl-D-erythritol 4-phosphate (MEP). The sequence is that of 2-C-methyl-D-erythritol 4-phosphate cytidylyltransferase from Chloroherpeton thalassium (strain ATCC 35110 / GB-78).